We begin with the raw amino-acid sequence, 217 residues long: Thymidylate kinase (217 aa).

16–23 (GIDGAGKT) is a binding site for ATP.

The protein belongs to the thymidylate kinase family.

It catalyses the reaction dTMP + ATP = dTDP + ADP. Functionally, phosphorylation of dTMP to form dTDP in both de novo and salvage pathways of dTTP synthesis. The polypeptide is Thymidylate kinase (Xylella fastidiosa (strain M12)).